The primary structure comprises 67 residues: Conotoxin Cl14c (67 aa).

A signal peptide spans 1–20 (MNVTVMFLVLLLLTMPLTDG). Residues 21 to 48 (FNIRATNGGELFGPVQRDAGNVLDHGFQ) constitute a propeptide that is removed on maturation.

This sequence belongs to the conotoxin L superfamily. Post-translationally, contains 2 disulfide bonds. Expressed by the venom duct.

The protein localises to the secreted. This Californiconus californicus (California cone) protein is Conotoxin Cl14c.